A 265-amino-acid polypeptide reads, in one-letter code: uncharacterized protein (265 aa).

Disordered stretches follow at residues 21 to 53 and 78 to 133; these read TLTH…LGPH and HAPS…SSVS. Positions 90–101 are enriched in acidic residues; sequence DDDDDDEDDDDS. Residues 114-123 show a composition bias toward low complexity; that stretch reads SSSSSSSPRV. Residue 137–144 coordinates ATP; sequence AILHQGKS.

This is an uncharacterized protein from Saccharomyces cerevisiae (strain ATCC 204508 / S288c) (Baker's yeast).